The following is a 421-amino-acid chain: Cell division protein FtsA (421 aa).

This sequence belongs to the FtsA/MreB family. In terms of assembly, self-interacts. Interacts with FtsZ.

It localises to the cell membrane. In terms of biological role, cell division protein that is involved in the assembly of the Z ring. May serve as a membrane anchor for the Z ring. The sequence is that of Cell division protein FtsA from Buchnera aphidicola subsp. Baizongia pistaciae (strain Bp).